The sequence spans 403 residues: Argininosuccinate synthase (403 aa).

Residues 10 to 18 and A38 contribute to the ATP site; that span reads AYSGGVDTS. Y89 provides a ligand contact to L-citrulline. G119 contacts ATP. The L-aspartate site is built by T121, N125, and D126. L-citrulline is bound at residue N125. Positions 129, 177, 186, 262, and 274 each coordinate L-citrulline.

The protein belongs to the argininosuccinate synthase family. Type 1 subfamily. In terms of assembly, homotetramer.

It localises to the cytoplasm. It catalyses the reaction L-citrulline + L-aspartate + ATP = 2-(N(omega)-L-arginino)succinate + AMP + diphosphate + H(+). It functions in the pathway amino-acid biosynthesis; L-arginine biosynthesis; L-arginine from L-ornithine and carbamoyl phosphate: step 2/3. The sequence is that of Argininosuccinate synthase from Synechococcus sp. (strain CC9605).